We begin with the raw amino-acid sequence, 336 residues long: DNA topoisomerase 1B (336 aa).

The region spanning E79–E336 is the Topo IB-type catalytic domain. Y294 acts as the O-(3'-phospho-DNA)-tyrosine intermediate in catalysis.

This sequence belongs to the type IB topoisomerase family. In terms of assembly, monomer.

The protein localises to the virion. It carries out the reaction ATP-independent breakage of single-stranded DNA, followed by passage and rejoining.. In terms of biological role, releases the supercoiling and torsional tension of DNA introduced during the DNA replication and transcription by transiently cleaving and rejoining one strand of the DNA duplex. Introduces a single-strand break via transesterification at a target site in duplex DNA. The scissile phosphodiester is attacked by the catalytic tyrosine of the enzyme, resulting in the formation of a DNA-(3'-phosphotyrosyl)-enzyme intermediate and the expulsion of a 5'-OH DNA strand. The free DNA strand then undergoes passage around the unbroken strand thus removing DNA supercoils. Finally, in the religation step, the DNA 5'-OH attacks the covalent intermediate to expel the active-site tyrosine and restore the DNA phosphodiester backbone. Cleaves DNA after CCCTT sequence. This Acanthamoeba polyphaga mimivirus (APMV) protein is DNA topoisomerase 1B (TOP1E).